We begin with the raw amino-acid sequence, 431 residues long: Adenylosuccinate synthetase (431 aa).

Residues 12–18 (GDEGKGK) and 40–42 (GHT) each bind GTP. The active-site Proton acceptor is Asp13. Mg(2+) contacts are provided by Asp13 and Gly40. Residues 13 to 16 (DEGK), 38 to 41 (NAGH), Thr131, Arg145, Gln225, Thr240, and Arg304 contribute to the IMP site. The active-site Proton donor is His41. A substrate-binding site is contributed by 300–306 (TTTGRKR). Residues Arg306, 332 to 334 (KLD), and 414 to 416 (STS) contribute to the GTP site.

It belongs to the adenylosuccinate synthetase family. Homodimer. Mg(2+) is required as a cofactor.

It is found in the cytoplasm. The enzyme catalyses IMP + L-aspartate + GTP = N(6)-(1,2-dicarboxyethyl)-AMP + GDP + phosphate + 2 H(+). It functions in the pathway purine metabolism; AMP biosynthesis via de novo pathway; AMP from IMP: step 1/2. Functionally, plays an important role in the de novo pathway of purine nucleotide biosynthesis. Catalyzes the first committed step in the biosynthesis of AMP from IMP. This chain is Adenylosuccinate synthetase, found in Dinoroseobacter shibae (strain DSM 16493 / NCIMB 14021 / DFL 12).